The primary structure comprises 234 residues: Preflagellin peptidase (234 aa).

Residue Met-1 is a topological domain, cytoplasmic. Residues 2–18 (INFIVGAIGLLIASIYD) form a helical membrane-spanning segment. Residues 19–23 (LKSRE) are Extracellular-facing. A helical transmembrane segment spans residues 24-46 (IEDYVWVSMVIFGLIYNGYLSFI). At 47-49 (SHD) the chain is on the cytoplasmic side. A helical membrane pass occupies residues 50 to 72 (MLYVIQSIVGFIVCFFLGFFMFL). Over 73 to 78 (LGVGGG) the chain is Extracellular. Residues 79 to 89 (DGKLIMGLGAL) form a helical membrane-spanning segment. The Cytoplasmic portion of the chain corresponds to 90–110 (IPKYNMPIHTPLGAILNYLYL). The chain crosses the membrane as a helical span at residues 111–139 (PSFPIMVVINAMFFSITLPIIIFLRNVIR). Residues 140-205 (GVKPKTKKEV…EEIWVTPAIP (66 aa)) are Extracellular-facing. The helical transmembrane segment at 206-217 (FVVPIFLSYLLT) threads the bilayer. Topologically, residues 218–234 (SIIGDKIIGIFLSVFGL) are cytoplasmic.

It belongs to the peptidase A24 family. Archaeal preflagellin peptidase subfamily.

Its subcellular location is the cell membrane. The catalysed reaction is Cleaves the signal peptide of 3 to 12 amino acids from the N-terminal of preflagellin, usually at Arg-Gly-|- or Lys-Gly-|-, to release flagellin.. Its function is as follows. Cleaves the N-terminal leader peptide from preflagellins. The sequence is that of Preflagellin peptidase (flaK) from Methanocaldococcus jannaschii (strain ATCC 43067 / DSM 2661 / JAL-1 / JCM 10045 / NBRC 100440) (Methanococcus jannaschii).